A 1387-amino-acid polypeptide reads, in one-letter code: Dicer-like protein 2-1 (1387 aa).

The Helicase ATP-binding domain maps to 26–205; that stretch reads MFEASLKENI…LLKIESNLDA (180 aa). 39-46 contacts ATP; it reads MGTGSGKT. The short motif at 146 to 149 is the DEAH box element; sequence DEAH. The 166-residue stretch at 370–535 folds into the Helicase C-terminal domain; that stretch reads KFRSLLEFLD…AYEDDERRLR (166 aa). Residues 565-659 enclose the Dicer dsRNA-binding fold domain; sequence AVAHLNHFCA…LPFKRNLELK (95 aa). 2 RNase III domains span residues 915-1055 and 1094-1277; these read ATRL…IDGG and DDHL…IDSH. 3 residues coordinate Mg(2+): Glu-1133, Asp-1263, and Glu-1266.

Belongs to the helicase family. Dicer subfamily. The cofactor is Mg(2+). Mn(2+) serves as cofactor.

In terms of biological role, dicer-like endonuclease involved in cleaving double-stranded RNA in the RNA interference (RNAi) pathway. Produces 21 to 25 bp dsRNAs (siRNAs) which target the selective destruction of homologous RNAs leading to sequence-specific suppression of gene expression, called post-transcriptional gene silencing (PTGS). Part of a broad host defense response against viral infection and transposons. The chain is Dicer-like protein 2-1 (dcl2-1) from Aspergillus niger (strain ATCC MYA-4892 / CBS 513.88 / FGSC A1513).